The primary structure comprises 67 residues: Large ribosomal subunit protein bL31 (67 aa).

Belongs to the bacterial ribosomal protein bL31 family. Type A subfamily. In terms of assembly, part of the 50S ribosomal subunit.

In terms of biological role, binds the 23S rRNA. The sequence is that of Large ribosomal subunit protein bL31 from Wolinella succinogenes (strain ATCC 29543 / DSM 1740 / CCUG 13145 / JCM 31913 / LMG 7466 / NCTC 11488 / FDC 602W) (Vibrio succinogenes).